We begin with the raw amino-acid sequence, 81 residues long: MAVKIRLRRMGAKKAPFYRIIVADSRAPRDGKFIDEIGYYNPLTEPVEVKINEEKANEWLSNGAQPTEVVKRLFNNAGLTK.

The protein belongs to the bacterial ribosomal protein bS16 family.

The protein is Small ribosomal subunit protein bS16 of Clostridium beijerinckii (strain ATCC 51743 / NCIMB 8052) (Clostridium acetobutylicum).